A 156-amino-acid polypeptide reads, in one-letter code: Small ribosomal subunit protein uS7 (156 aa).

The protein belongs to the universal ribosomal protein uS7 family. Part of the 30S ribosomal subunit. Contacts proteins S9 and S11.

In terms of biological role, one of the primary rRNA binding proteins, it binds directly to 16S rRNA where it nucleates assembly of the head domain of the 30S subunit. Is located at the subunit interface close to the decoding center, probably blocks exit of the E-site tRNA. The chain is Small ribosomal subunit protein uS7 from Leptothrix cholodnii (strain ATCC 51168 / LMG 8142 / SP-6) (Leptothrix discophora (strain SP-6)).